The sequence spans 306 residues: MPNPLYRQHIISISDLSREQLECLLQTALKLKAHPRGDLLEGKLIGSCFFEPSTRTRLSFETAVQCLGGKVIGFSDGANTSAKKGETLADTARIISGYTDAIIQRHPKDGAARVAAEFSRVPVINAGDGTNQHPSQTLLDLVTIYETQGRLDKLKIAMAGDLKYGRTVHSLCQALKRWGCEFAFVSPPSLAMPDYITEELDEAGCRYRILGSLEEAAEWADILYMTRVQRERFDEQEFAKIQGKFNLEASMLARAKPNLRVLHPLPRVDEIHPDVDATPHAYYFEQATNGVYARMAILSLVLNEEV.

Carbamoyl phosphate contacts are provided by R55 and T56. Residue K84 participates in L-aspartate binding. R105, H133, and Q136 together coordinate carbamoyl phosphate. 2 residues coordinate L-aspartate: R166 and R227. Carbamoyl phosphate-binding residues include L265 and P266.

It belongs to the aspartate/ornithine carbamoyltransferase superfamily. ATCase family. In terms of assembly, heterododecamer (2C3:3R2) of six catalytic PyrB chains organized as two trimers (C3), and six regulatory PyrI chains organized as three dimers (R2).

It carries out the reaction carbamoyl phosphate + L-aspartate = N-carbamoyl-L-aspartate + phosphate + H(+). It participates in pyrimidine metabolism; UMP biosynthesis via de novo pathway; (S)-dihydroorotate from bicarbonate: step 2/3. Catalyzes the condensation of carbamoyl phosphate and aspartate to form carbamoyl aspartate and inorganic phosphate, the committed step in the de novo pyrimidine nucleotide biosynthesis pathway. The sequence is that of Aspartate carbamoyltransferase catalytic subunit from Neisseria meningitidis serogroup C (strain 053442).